A 1051-amino-acid polypeptide reads, in one-letter code: Carbamoyl phosphate synthase large chain (1051 aa).

The interval 1–399 is carboxyphosphate synthetic domain; sequence MRETPKKVLV…SLQKAIRMLD (399 aa). Residues Arg127, Arg167, Gly173, Gly174, Lys206, Leu208, Glu213, Gly239, Val240, His241, Gln282, and Glu296 each coordinate ATP. Residues 131–325 form the ATP-grasp 1 domain; it reads RETMIENNLP…LAYVSAKLAL (195 aa). Mg(2+) is bound by residues Gln282, Glu296, and Asn298. Positions 282, 296, and 298 each coordinate Mn(2+). Positions 400-548 are oligomerization domain; sequence IGEPGVVGGK…LTYNGTEDDI (149 aa). Positions 549–930 are carbamoyl phosphate synthetic domain; that stretch reads EFSQGNKLLI…LKSWLSSMPN (382 aa). Residues 673–863 enclose the ATP-grasp 2 domain; that stretch reads SKLLDKLGIS…LINESMKAIF (191 aa). The ATP site is built by Arg709, Lys748, Ile750, Glu755, Gly779, Val780, His781, Ser782, Gln822, and Glu834. Gln822, Glu834, and Asn836 together coordinate Mg(2+). Mn(2+) is bound by residues Gln822, Glu834, and Asn836. The region spanning 930–1051 is the MGS-like domain; that stretch reads NRIPNKNGIA…FEISEYGGGI (122 aa). The interval 931–1051 is allosteric domain; sequence RIPNKNGIAL…FEISEYGGGI (121 aa).

It belongs to the CarB family. Composed of two chains; the small (or glutamine) chain promotes the hydrolysis of glutamine to ammonia, which is used by the large (or ammonia) chain to synthesize carbamoyl phosphate. Tetramer of heterodimers (alpha,beta)4. It depends on Mg(2+) as a cofactor. Mn(2+) serves as cofactor.

It carries out the reaction hydrogencarbonate + L-glutamine + 2 ATP + H2O = carbamoyl phosphate + L-glutamate + 2 ADP + phosphate + 2 H(+). The catalysed reaction is hydrogencarbonate + NH4(+) + 2 ATP = carbamoyl phosphate + 2 ADP + phosphate + 2 H(+). Its pathway is amino-acid biosynthesis; L-arginine biosynthesis; carbamoyl phosphate from bicarbonate: step 1/1. The protein operates within pyrimidine metabolism; UMP biosynthesis via de novo pathway; (S)-dihydroorotate from bicarbonate: step 1/3. Its function is as follows. Large subunit of the glutamine-dependent carbamoyl phosphate synthetase (CPSase). CPSase catalyzes the formation of carbamoyl phosphate from the ammonia moiety of glutamine, carbonate, and phosphate donated by ATP, constituting the first step of 2 biosynthetic pathways, one leading to arginine and/or urea and the other to pyrimidine nucleotides. The large subunit (synthetase) binds the substrates ammonia (free or transferred from glutamine from the small subunit), hydrogencarbonate and ATP and carries out an ATP-coupled ligase reaction, activating hydrogencarbonate by forming carboxy phosphate which reacts with ammonia to form carbamoyl phosphate. The polypeptide is Carbamoyl phosphate synthase large chain (Saccharolobus solfataricus (strain ATCC 35092 / DSM 1617 / JCM 11322 / P2) (Sulfolobus solfataricus)).